A 507-amino-acid chain; its full sequence is ATP synthase subunit alpha, chloroplastic (507 aa).

Position 170 to 177 (Gly-170 to Thr-177) interacts with ATP.

Belongs to the ATPase alpha/beta chains family. F-type ATPases have 2 components, CF(1) - the catalytic core - and CF(0) - the membrane proton channel. CF(1) has five subunits: alpha(3), beta(3), gamma(1), delta(1), epsilon(1). CF(0) has four main subunits: a, b, b' and c.

It is found in the plastid. The protein localises to the chloroplast thylakoid membrane. The enzyme catalyses ATP + H2O + 4 H(+)(in) = ADP + phosphate + 5 H(+)(out). Its function is as follows. Produces ATP from ADP in the presence of a proton gradient across the membrane. The alpha chain is a regulatory subunit. The protein is ATP synthase subunit alpha, chloroplastic of Spinacia oleracea (Spinach).